A 142-amino-acid polypeptide reads, in one-letter code: Large ribosomal subunit protein uL13 (142 aa).

It belongs to the universal ribosomal protein uL13 family. As to quaternary structure, part of the 50S ribosomal subunit.

Its function is as follows. This protein is one of the early assembly proteins of the 50S ribosomal subunit, although it is not seen to bind rRNA by itself. It is important during the early stages of 50S assembly. This is Large ribosomal subunit protein uL13 from Vesicomyosocius okutanii subsp. Calyptogena okutanii (strain HA).